The following is a 346-amino-acid chain: MRDIGSQPAAGVRSMKVRDRALEIIRERISRGDPLYDFTGLASRPKVDAASDELRTYLSEALILPEIRELCREHFDAPEYEVLVAPRTTAAVIATILALEPRSVLHVLPEDGEAHPCVEEGCRLAGAEYEEVEESEIPDLDGFDLVVVTGCDVRWNVVSEDTLREVASAEAVTLLDDASGDRVRRLHGQKPGPRYGFDLVVTSCDKLMDGPRAGVLIGRDDLVEGVRRVCEGYGWTVDGPTLAAVKRAFEEFELSSLEARLKELERVYERLKDELDVERTGAGLVFHGVEREVEIGLGLLRRYGIMTITALGYERVDRTLRFNLLTEDAERFGYDRFVEVVKGELS.

At lysine 206 the chain carries N6-(pyridoxal phosphate)lysine.

Requires pyridoxal 5'-phosphate as cofactor.

This is UPF0425 pyridoxal phosphate-dependent protein MK0620 from Methanopyrus kandleri (strain AV19 / DSM 6324 / JCM 9639 / NBRC 100938).